We begin with the raw amino-acid sequence, 418 residues long: Tektin-1 (418 aa).

Coiled-coil stretches lie at residues 20-107, 134-177, 266-308, and 332-383; these read NKSQ…SYKE, QELQ…DLKD, NGLK…QQEG, and VAQY…ENTI.

The protein belongs to the tektin family. In terms of assembly, microtubule inner protein component of sperm flagellar doublet microtubules. In terms of processing, ubiquitinated, leading to its degradation. Deubiquitinated by USP16, promoting its stability. Predominantly expressed in testis.

It is found in the cytoplasm. Its subcellular location is the cytoskeleton. It localises to the cilium axoneme. The protein localises to the flagellum axoneme. Functionally, microtubule inner protein (MIP) part of the dynein-decorated doublet microtubules (DMTs) in cilia and flagellar axoneme. Forms filamentous polymers in the walls of ciliary and flagellar microtubules. The sequence is that of Tektin-1 (Tekt1) from Rattus norvegicus (Rat).